Consider the following 270-residue polypeptide: Acyl-[acyl-carrier-protein]--UDP-N-acetylglucosamine O-acyltransferase (270 aa).

Residues 69–72 (QDLK), His-121, His-140, and Gln-157 contribute to the substrate site.

Belongs to the transferase hexapeptide repeat family. LpxA subfamily. Homotrimer.

Its subcellular location is the cytoplasm. The enzyme catalyses a (3R)-hydroxyacyl-[ACP] + UDP-N-acetyl-alpha-D-glucosamine = a UDP-3-O-[(3R)-3-hydroxyacyl]-N-acetyl-alpha-D-glucosamine + holo-[ACP]. Its pathway is glycolipid biosynthesis; lipid IV(A) biosynthesis; lipid IV(A) from (3R)-3-hydroxytetradecanoyl-[acyl-carrier-protein] and UDP-N-acetyl-alpha-D-glucosamine: step 1/6. Its function is as follows. Involved in the biosynthesis of lipid A, a phosphorylated glycolipid that anchors the lipopolysaccharide to the outer membrane of the cell. This is Acyl-[acyl-carrier-protein]--UDP-N-acetylglucosamine O-acyltransferase from Helicobacter pylori (strain ATCC 700392 / 26695) (Campylobacter pylori).